Consider the following 256-residue polypeptide: Triosephosphate isomerase (256 aa).

12-14 (NWK) lines the substrate pocket. Histidine 99 serves as the catalytic Electrophile. Glutamate 171 serves as the catalytic Proton acceptor. Residues glycine 177, serine 217, and 238–239 (GG) contribute to the substrate site.

It belongs to the triosephosphate isomerase family. As to quaternary structure, homodimer.

It is found in the cytoplasm. The catalysed reaction is D-glyceraldehyde 3-phosphate = dihydroxyacetone phosphate. The protein operates within carbohydrate biosynthesis; gluconeogenesis. Its pathway is carbohydrate degradation; glycolysis; D-glyceraldehyde 3-phosphate from glycerone phosphate: step 1/1. Functionally, involved in the gluconeogenesis. Catalyzes stereospecifically the conversion of dihydroxyacetone phosphate (DHAP) to D-glyceraldehyde-3-phosphate (G3P). The protein is Triosephosphate isomerase of Rubrobacter xylanophilus (strain DSM 9941 / JCM 11954 / NBRC 16129 / PRD-1).